Here is a 258-residue protein sequence, read N- to C-terminus: Indole-3-glycerol phosphate synthase (258 aa).

The protein belongs to the TrpC family.

The enzyme catalyses 1-(2-carboxyphenylamino)-1-deoxy-D-ribulose 5-phosphate + H(+) = (1S,2R)-1-C-(indol-3-yl)glycerol 3-phosphate + CO2 + H2O. Its pathway is amino-acid biosynthesis; L-tryptophan biosynthesis; L-tryptophan from chorismate: step 4/5. The chain is Indole-3-glycerol phosphate synthase from Campylobacter jejuni subsp. doylei (strain ATCC BAA-1458 / RM4099 / 269.97).